An 87-amino-acid polypeptide reads, in one-letter code: Small ribosomal subunit protein bS18 (87 aa).

Residues M1 to R10 show a composition bias toward basic and acidic residues. A disordered region spans residues M1 to A23.

The protein belongs to the bacterial ribosomal protein bS18 family. In terms of assembly, part of the 30S ribosomal subunit. Forms a tight heterodimer with protein bS6.

Its function is as follows. Binds as a heterodimer with protein bS6 to the central domain of the 16S rRNA, where it helps stabilize the platform of the 30S subunit. The protein is Small ribosomal subunit protein bS18 of Clavibacter michiganensis subsp. michiganensis (strain NCPPB 382).